A 399-amino-acid polypeptide reads, in one-letter code: S-adenosylmethionine synthase (399 aa).

Histidine 17 is an ATP binding site. Aspartate 19 is a Mg(2+) binding site. Glutamate 45 lines the K(+) pocket. L-methionine-binding residues include glutamate 58 and glutamine 101. The tract at residues 101 to 111 (QSPDIAQGVDE) is flexible loop. ATP-binding positions include 177 to 179 (DAK), 244 to 245 (RF), aspartate 253, 259 to 260 (RK), alanine 276, and lysine 280. An L-methionine-binding site is contributed by aspartate 253. Residue lysine 284 participates in L-methionine binding.

This sequence belongs to the AdoMet synthase family. In terms of assembly, homotetramer; dimer of dimers. It depends on Mg(2+) as a cofactor. Requires K(+) as cofactor.

It localises to the cytoplasm. The catalysed reaction is L-methionine + ATP + H2O = S-adenosyl-L-methionine + phosphate + diphosphate. The protein operates within amino-acid biosynthesis; S-adenosyl-L-methionine biosynthesis; S-adenosyl-L-methionine from L-methionine: step 1/1. Catalyzes the formation of S-adenosylmethionine (AdoMet) from methionine and ATP. The overall synthetic reaction is composed of two sequential steps, AdoMet formation and the subsequent tripolyphosphate hydrolysis which occurs prior to release of AdoMet from the enzyme. This is S-adenosylmethionine synthase from Listeria innocua serovar 6a (strain ATCC BAA-680 / CLIP 11262).